Reading from the N-terminus, the 318-residue chain is Mitochondrial coenzyme A transporter SLC25A42 (318 aa).

Solcar repeat units follow at residues 31–117 (RQVL…YKRI), 129–214 (LPPW…LKSL), and 224–312 (PYPF…MQIL). 6 helical membrane-spanning segments follow: residues 33–53 (VLSS…AVAP), 89–109 (LWRG…IQFS), 135–155 (LLAG…LDLV), 186–206 (LYFG…LSFF), 230–250 (MVFG…LDVV), and 293–313 (LKGP…QILL).

It belongs to the mitochondrial carrier (TC 2.A.29) family.

The protein localises to the mitochondrion inner membrane. It carries out the reaction ADP(out) + CoA(in) = ADP(in) + CoA(out). The catalysed reaction is 3'-dephospho-CoA(in) + ADP(out) = 3'-dephospho-CoA(out) + ADP(in). It catalyses the reaction adenosine 3',5'-bisphosphate(in) + ADP(out) = adenosine 3',5'-bisphosphate(out) + ADP(in). The enzyme catalyses AMP(in) + ADP(out) = AMP(out) + ADP(in). It carries out the reaction dADP(in) + ADP(out) = dADP(out) + ADP(in). The catalysed reaction is ADP(in) + ATP(out) = ADP(out) + ATP(in). Its function is as follows. Mitochondrial carrier mediating the transport of coenzyme A (CoA) in mitochondria in exchange for intramitochondrial (deoxy)adenine nucleotides and adenosine 3',5'-diphosphate. In Mus musculus (Mouse), this protein is Mitochondrial coenzyme A transporter SLC25A42 (Slc25a42).